A 701-amino-acid polypeptide reads, in one-letter code: Cytosolic endo-beta-N-acetylglucosaminidase 2 (701 aa).

The protein belongs to the glycosyl hydrolase 85 family.

Its subcellular location is the cytoplasm. It localises to the cytosol. It carries out the reaction an N(4)-(oligosaccharide-(1-&gt;3)-[oligosaccharide-(1-&gt;6)]-beta-D-Man-(1-&gt;4)-beta-D-GlcNAc-(1-&gt;4)-alpha-D-GlcNAc)-L-asparaginyl-[protein] + H2O = an oligosaccharide-(1-&gt;3)-[oligosaccharide-(1-&gt;6)]-beta-D-Man-(1-&gt;4)-D-GlcNAc + N(4)-(N-acetyl-beta-D-glucosaminyl)-L-asparaginyl-[protein]. In terms of biological role, endoglycosidase that releases N-glycans from glycoproteins by cleaving the beta-1,4-glycosidic bond in the N,N'-diacetylchitobiose core. Involved in the production of high-mannose type N-glycans during plant development and fruit maturation. The polypeptide is Cytosolic endo-beta-N-acetylglucosaminidase 2 (Arabidopsis thaliana (Mouse-ear cress)).